Reading from the N-terminus, the 201-residue chain is Probable molybdenum cofactor guanylyltransferase (201 aa).

GTP-binding positions include 16–18 (LAG), K28, D75, and D107. D107 contributes to the Mg(2+) binding site.

The protein belongs to the MobA family. The cofactor is Mg(2+).

It is found in the cytoplasm. The enzyme catalyses Mo-molybdopterin + GTP + H(+) = Mo-molybdopterin guanine dinucleotide + diphosphate. In terms of biological role, transfers a GMP moiety from GTP to Mo-molybdopterin (Mo-MPT) cofactor (Moco or molybdenum cofactor) to form Mo-molybdopterin guanine dinucleotide (Mo-MGD) cofactor. The sequence is that of Probable molybdenum cofactor guanylyltransferase from Mycobacterium marinum (strain ATCC BAA-535 / M).